A 624-amino-acid polypeptide reads, in one-letter code: Chaperone protein HtpG (624 aa).

Residues 1-336 are a; substrate-binding; it reads MKGQETRGFQ…SNDLPLNVSR (336 aa). Residues 337–552 are b; sequence EILQDSTVTR…ADEMSTQMAK (216 aa). The segment at 553 to 624 is c; it reads LFAAAGQSVP…IRRMNQLLVS (72 aa).

It belongs to the heat shock protein 90 family. As to quaternary structure, homodimer.

The protein localises to the cytoplasm. Its function is as follows. Molecular chaperone. Has ATPase activity. The protein is Chaperone protein HtpG of Salmonella paratyphi B (strain ATCC BAA-1250 / SPB7).